A 400-amino-acid polypeptide reads, in one-letter code: NADH-quinone oxidoreductase subunit D (400 aa).

Belongs to the complex I 49 kDa subunit family. NDH-1 is composed of 14 different subunits. Subunits NuoB, C, D, E, F, and G constitute the peripheral sector of the complex.

It is found in the cell inner membrane. It carries out the reaction a quinone + NADH + 5 H(+)(in) = a quinol + NAD(+) + 4 H(+)(out). In terms of biological role, NDH-1 shuttles electrons from NADH, via FMN and iron-sulfur (Fe-S) centers, to quinones in the respiratory chain. The immediate electron acceptor for the enzyme in this species is believed to be a menaquinone. Couples the redox reaction to proton translocation (for every two electrons transferred, four hydrogen ions are translocated across the cytoplasmic membrane), and thus conserves the redox energy in a proton gradient. This Chlorobaculum tepidum (strain ATCC 49652 / DSM 12025 / NBRC 103806 / TLS) (Chlorobium tepidum) protein is NADH-quinone oxidoreductase subunit D.